Consider the following 417-residue polypeptide: Serine hydroxymethyltransferase (417 aa).

(6S)-5,6,7,8-tetrahydrofolate is bound by residues Leu121 and 125–127; that span reads GHL. Residue Lys229 is modified to N6-(pyridoxal phosphate)lysine. 355 to 357 is a (6S)-5,6,7,8-tetrahydrofolate binding site; it reads SPF.

It belongs to the SHMT family. In terms of assembly, homodimer. The cofactor is pyridoxal 5'-phosphate.

The protein resides in the cytoplasm. The enzyme catalyses (6R)-5,10-methylene-5,6,7,8-tetrahydrofolate + glycine + H2O = (6S)-5,6,7,8-tetrahydrofolate + L-serine. It functions in the pathway one-carbon metabolism; tetrahydrofolate interconversion. The protein operates within amino-acid biosynthesis; glycine biosynthesis; glycine from L-serine: step 1/1. Functionally, catalyzes the reversible interconversion of serine and glycine with tetrahydrofolate (THF) serving as the one-carbon carrier. This reaction serves as the major source of one-carbon groups required for the biosynthesis of purines, thymidylate, methionine, and other important biomolecules. Also exhibits THF-independent aldolase activity toward beta-hydroxyamino acids, producing glycine and aldehydes, via a retro-aldol mechanism. The chain is Serine hydroxymethyltransferase from Buchnera aphidicola subsp. Acyrthosiphon pisum (strain APS) (Acyrthosiphon pisum symbiotic bacterium).